We begin with the raw amino-acid sequence, 288 residues long: Polyamine aminopropyltransferase (288 aa).

The PABS domain occupies 9 to 238; it reads ETLHDQFGQY…GIMTFAWATD (230 aa). Residue glutamine 33 coordinates S-methyl-5'-thioadenosine. Residues histidine 64 and aspartate 88 each contribute to the spermidine site. S-methyl-5'-thioadenosine is bound by residues glutamate 108 and 140–141; that span reads DG. Residue aspartate 158 is the Proton acceptor of the active site. 158–161 is a spermidine binding site; the sequence is DCTD. Position 165 (proline 165) interacts with S-methyl-5'-thioadenosine.

It belongs to the spermidine/spermine synthase family. In terms of assembly, homodimer or homotetramer.

It localises to the cytoplasm. It carries out the reaction S-adenosyl 3-(methylsulfanyl)propylamine + putrescine = S-methyl-5'-thioadenosine + spermidine + H(+). Its pathway is amine and polyamine biosynthesis; spermidine biosynthesis; spermidine from putrescine: step 1/1. Functionally, catalyzes the irreversible transfer of a propylamine group from the amino donor S-adenosylmethioninamine (decarboxy-AdoMet) to putrescine (1,4-diaminobutane) to yield spermidine. The polypeptide is Polyamine aminopropyltransferase (Shigella sonnei (strain Ss046)).